An 86-amino-acid chain; its full sequence is Small ribosomal subunit protein bS20 (86 aa).

The protein belongs to the bacterial ribosomal protein bS20 family.

Functionally, binds directly to 16S ribosomal RNA. The chain is Small ribosomal subunit protein bS20 from Pelagibacter ubique (strain HTCC1062).